We begin with the raw amino-acid sequence, 129 residues long: Glycine cleavage system H protein (129 aa).

A Lipoyl-binding domain is found at 24 to 106 (IATIGITEFA…YGEGWFLKVR (83 aa)). Residue Lys65 is modified to N6-lipoyllysine.

Belongs to the GcvH family. As to quaternary structure, the glycine cleavage system is composed of four proteins: P, T, L and H. (R)-lipoate serves as cofactor.

Functionally, the glycine cleavage system catalyzes the degradation of glycine. The H protein shuttles the methylamine group of glycine from the P protein to the T protein. The protein is Glycine cleavage system H protein of Nostoc punctiforme (strain ATCC 29133 / PCC 73102).